The primary structure comprises 281 residues: tRNA pseudouridine synthase A (281 aa).

Catalysis depends on Asp55, which acts as the Nucleophile. Residue Tyr110 coordinates substrate.

It belongs to the tRNA pseudouridine synthase TruA family.

It carries out the reaction uridine(38/39/40) in tRNA = pseudouridine(38/39/40) in tRNA. Its function is as follows. Formation of pseudouridine at positions 38, 39 and 40 in the anticodon stem and loop of transfer RNAs. The polypeptide is tRNA pseudouridine synthase A (Methanocorpusculum labreanum (strain ATCC 43576 / DSM 4855 / Z)).